Consider the following 296-residue polypeptide: Putative mannose 6-phosphate receptor-like protein C530.09c (296 aa).

The signal sequence occupies residues 1 to 25 (MRLLTCLINVLAGLTLFSQFQRAFG). Residues 26 to 206 (LTITRRGFKV…TVKKDSTLNP (181 aa)) are Lumenal-facing. An MRH domain is found at 42–197 (PFCALHHPNT…EWKTIHACPT (156 aa)). Residues C44 and C87 are joined by a disulfide bond. 5 N-linked (GlcNAc...) asparagine glycosylation sites follow: N64, N81, N93, N96, and N143. 2 cysteine pairs are disulfide-bonded: C147-C183 and C163-C195. The helical transmembrane segment at 207–227 (VSVFLLFCAIAFLAYFVGGFV) threads the bilayer. The Cytoplasmic segment spans residues 228 to 249 (YQRVVLNARGLRQIPNYEMWRS). A helical transmembrane segment spans residues 250–270 (LFGFISDIVIILYSSILSILP). Residues 271–296 (SSITRMRGNRRNIDYVEDALIDDIDT) are Lumenal-facing.

This sequence belongs to the MRL1/IGF2R family.

The protein resides in the golgi apparatus. It localises to the trans-Golgi network membrane. It is found in the endosome membrane. This chain is Putative mannose 6-phosphate receptor-like protein C530.09c, found in Schizosaccharomyces pombe (strain 972 / ATCC 24843) (Fission yeast).